The sequence spans 214 residues: Uridine kinase (214 aa).

G15–S22 is a binding site for ATP.

It belongs to the uridine kinase family.

Its subcellular location is the cytoplasm. The enzyme catalyses uridine + ATP = UMP + ADP + H(+). It carries out the reaction cytidine + ATP = CMP + ADP + H(+). Its pathway is pyrimidine metabolism; CTP biosynthesis via salvage pathway; CTP from cytidine: step 1/3. It participates in pyrimidine metabolism; UMP biosynthesis via salvage pathway; UMP from uridine: step 1/1. This Aeromonas salmonicida (strain A449) protein is Uridine kinase.